Consider the following 458-residue polypeptide: Periphilin-1 (458 aa).

Basic and acidic residues-rich tracts occupy residues 1 to 18 (MWSE…ERAP) and 63 to 107 (EGRS…DGFR). Disordered regions lie at residues 1-51 (MWSE…SYNR) and 63-284 (EGRS…LFED). The Nuclear localization signal signature appears at 103–109 (RDGFRRK). Lys109 participates in a covalent cross-link: Glycyl lysine isopeptide (Lys-Gly) (interchain with G-Cter in SUMO2). 4 positions are modified to phosphoserine: Ser110, Ser114, Ser133, and Ser140. Basic and acidic residues predominate over residues 116–142 (YARERSPYKRDNTFFRESPVGRKDSPH). A compositionally biased stretch (low complexity) spans 143–154 (SRSGSSVSSRSY). Lys160 participates in a covalent cross-link: Glycyl lysine isopeptide (Lys-Gly) (interchain with G-Cter in SUMO2). Residues Ser161 and Ser167 each carry the phosphoserine modification. Residue Lys180 forms a Glycyl lysine isopeptide (Lys-Gly) (interchain with G-Cter in SUMO2) linkage. The segment covering 181-194 (RQNEGNPERDKERP) has biased composition (basic and acidic residues). Ser197 is subject to Phosphoserine. Residue Lys199 forms a Glycyl lysine isopeptide (Lys-Gly) (interchain with G-Cter in SUMO2) linkage. Phosphoserine is present on residues Ser201 and Ser205. Residues 205–215 (SPSSGSAVSSS) show a composition bias toward low complexity. A compositionally biased stretch (basic and acidic residues) spans 217-230 (VLDKPSRLTEKELA). Residue Lys227 forms a Glycyl lysine isopeptide (Lys-Gly) (interchain with G-Cter in SUMO2) linkage. Lys235 and Lys240 each carry N6-acetyllysine; alternate. Residues Lys235 and Lys240 each participate in a glycyl lysine isopeptide (Lys-Gly) (interchain with G-Cter in SUMO2); alternate cross-link. The segment covering 237–246 (AAEKLEKSDE) has biased composition (basic and acidic residues). Ser325 is modified (phosphoserine). A Glycyl lysine isopeptide (Lys-Gly) (interchain with G-Cter in SUMO2) cross-link involves residue Lys328. A disordered region spans residues 345–406 (GQTWQQVPPV…TQLRRTTGAP (62 aa)). Pro residues predominate over residues 377 to 386 (PQPPQAPQPL). Positions 388-398 (PRKKRVRRTTQ) are enriched in basic residues. Lys453 participates in a covalent cross-link: Glycyl lysine isopeptide (Lys-Gly) (interchain with G-Cter in SUMO2).

As to quaternary structure, homodimer. Component of the HUSH complex; at least composed of TASOR, PPHLN1 and MPHOSPH8. Interacts with SIN3A and HDAC1. May interact with PPL. In terms of processing, substrate of transglutaminase (in vitro). Ubiquitous.

It localises to the nucleus. The protein localises to the cytoplasm. The protein resides in the chromosome. Its function is as follows. Component of the HUSH complex, a multiprotein complex that mediates epigenetic repression. The HUSH complex is recruited to genomic loci rich in H3K9me3 and is probably required to maintain transcriptional silencing by promoting recruitment of SETDB1, a histone methyltransferase that mediates further deposition of H3K9me3. In the HUSH complex, contributes to the maintenance of the complex at chromatin. Acts as a transcriptional corepressor and regulates the cell cycle, probably via the HUSH complex. The HUSH complex is also involved in the silencing of unintegrated retroviral DNA: some part of the retroviral DNA formed immediately after infection remains unintegrated in the host genome and is transcriptionally repressed. May be involved in epithelial differentiation by contributing to epidermal integrity and barrier formation. This Homo sapiens (Human) protein is Periphilin-1.